We begin with the raw amino-acid sequence, 302 residues long: tRNA pseudouridine synthase B (302 aa).

Asp47 acts as the Nucleophile in catalysis.

It belongs to the pseudouridine synthase TruB family. Type 1 subfamily.

The enzyme catalyses uridine(55) in tRNA = pseudouridine(55) in tRNA. In terms of biological role, responsible for synthesis of pseudouridine from uracil-55 in the psi GC loop of transfer RNAs. This chain is tRNA pseudouridine synthase B, found in Ruegeria sp. (strain TM1040) (Silicibacter sp.).